The sequence spans 66 residues: Beta-toxin ChFII.7 (66 aa).

The LCN-type CS-alpha/beta domain occupies 1–66; sequence KEGYLVNHST…VWPLPKKTCN (66 aa). Disulfide bonds link C12–C65, C16–C41, C25–C46, and C29–C48. Asparagine amide is present on N66.

As to expression, expressed by the venom gland.

It is found in the secreted. In terms of biological role, beta toxins bind voltage independently at site-4 of sodium channels (Nav) and shift the activation voltage toward more negative potentials, thereby affecting sodium channel activation CC and promoting spontaneous and repetitive firing. This chain is Beta-toxin ChFII.7, found in Centruroides hirsutipalpus (Scorpion).